The following is a 113-amino-acid chain: MSSVYIVEEHYIPYSVAKKLLTDVIRSGGSSNLLQRTYDYLNSVEKCDAESAQKVIEELSNIVSREDVRAILASICPTTSDEVRSILVMDTNKTYTSEDIQKIIDIIRKYIKS.

Belongs to the eukaryotic RPB4 RNA polymerase subunit family. In terms of assembly, part of the 13-subunit RNA polymerase complex. Forms a stalk with Rpo7 that extends from the main structure.

It is found in the cytoplasm. The catalysed reaction is RNA(n) + a ribonucleoside 5'-triphosphate = RNA(n+1) + diphosphate. Functionally, DNA-dependent RNA polymerase (RNAP) catalyzes the transcription of DNA into RNA using the four ribonucleoside triphosphates as substrates. This subunit is less well bound than the others. The sequence is that of DNA-directed RNA polymerase subunit Rpo4 from Saccharolobus solfataricus (strain ATCC 35092 / DSM 1617 / JCM 11322 / P2) (Sulfolobus solfataricus).